The sequence spans 277 residues: Large ribosomal subunit protein uL2 (277 aa).

Residues 225 to 277 form a disordered region; sequence MNPIDHPHGGGEGKTAAGRHPVSPWGTPSKGFRTRVNKRTDGMIVRRRYSNKG.

This sequence belongs to the universal ribosomal protein uL2 family. Part of the 50S ribosomal subunit. Forms a bridge to the 30S subunit in the 70S ribosome.

Functionally, one of the primary rRNA binding proteins. Required for association of the 30S and 50S subunits to form the 70S ribosome, for tRNA binding and peptide bond formation. It has been suggested to have peptidyltransferase activity; this is somewhat controversial. Makes several contacts with the 16S rRNA in the 70S ribosome. This is Large ribosomal subunit protein uL2 from Nitrosospira multiformis (strain ATCC 25196 / NCIMB 11849 / C 71).